The following is a 470-amino-acid chain: MPIRALCTICSDFFDHSRDVAAIHCGHTFHLQCLIQWFETAPSRTCPQCRIQVGKKTIINKLFFDLAQEEENVLDAEFLKNELDSVKAQLSQKDREKRDSQAIIDTLRDTLEERNATVESLQNALNKAEMLCSTLKKQMKFLEQRQDETKQAREEAHRLKCKMKTMEQIELLLQSQRSEVEEMIRDMGVGQSAVEQLAVYCVSLKKEYENLKEARKATGELADRLKKDLVSSRSKLKTLNTELDQAKLELRSAQKDLQSADQEITSLRKKLMILQGTLSLPPATNETVSRLVFESPAPVEMMNPRLHQPPFGDEIDLNTTFDVNTPPTQTSGSQHCLPKKLCLERARSPMQNVLKKVHKVSKPESQLSLGGQRCVGELDEELAGAFPLFIRNAVLGQKQPNRTTAESRCSTDVVRIGFDGLGGRTKFIQPRDTTIIRPVPVKSKAKSKQKVRIKTVSSASQPKLDTFLCQ.

Residues 7–50 (CTICSDFFDHSRDVAAIHCGHTFHLQCLIQWFETAPSRTCPQCR) form an RING-type; atypical zinc finger. A coiled-coil region spans residues 76–277 (AEFLKNELDS…RKKLMILQGT (202 aa)). Positions 211 to 470 (LKEARKATGE…QPKLDTFLCQ (260 aa)) are interaction with CYLD. The PIP-box motif lies at 461–470 (QPKLDTFLCQ).

Belongs to the TRAIP family. Interacts (via PIP-box) with PCNA. Binds TRAF1, TRAF2, TRAF3, TRAF5 and TRAF6 is part of the receptor-TRAF signaling complex. May interact with CYLD; the C-terminus interacts with CYLD, however the interaction was not detected with the full-length protein. Interacts with POLK and POLN. Interacts with UIMC1. Autoubiquitinated. Post-translationally, sumoylated; sumoylation is required for nuclear localization. Sumoylation increases protein stability, possibly by preventing ubiquitination. In terms of tissue distribution, detected in testis and thymus, and at lower levels in spleen.

It is found in the nucleus. The protein localises to the nucleoplasm. It localises to the nucleolus. Its subcellular location is the chromosome. The protein resides in the cytoplasm. It is found in the perinuclear region. The enzyme catalyses S-ubiquitinyl-[E2 ubiquitin-conjugating enzyme]-L-cysteine + [acceptor protein]-L-lysine = [E2 ubiquitin-conjugating enzyme]-L-cysteine + N(6)-ubiquitinyl-[acceptor protein]-L-lysine.. It participates in protein modification; protein ubiquitination. Functionally, E3 ubiquitin ligase required to protect genome stability in response to replication stress. Acts as a key regulator of interstrand cross-link repair, which takes place when both strands of duplex DNA are covalently tethered together, thereby blocking replication and transcription. During mitosis, controls the choice between the two pathways of replication-coupled interstrand-cross-link repair by mediating ubiquitination of MCM7 subunit of the CMG helicase complex. Short ubiquitin chains on MCM7 promote recruitment of DNA glycosylase NEIL3. If the interstrand cross-link cannot be cleaved by NEIL3, the ubiquitin chains continue to grow on MCM7, promoting the unloading of the CMG helicase complex by the VCP/p97 ATPase, enabling the Fanconi anemia DNA repair pathway. Only catalyzes ubiquitination of MCM7 when forks converge. Also involved in the repair of covalent DNA-protein cross-links (DPCs) during DNA synthesis: promotes ubiquitination of DPCs, leading to their degradation by the proteasome. Has also been proposed to play a role in promoting translesion synthesis by mediating the assembly of 'Lys-63'-linked poly-ubiquitin chains on the Y-family polymerase POLN in order to facilitate bypass of DNA lesions and preserve genomic integrity. The function in translesion synthesis is however controversial. Acts as a regulator of the spindle assembly checkpoint. Also acts as a negative regulator of innate immune signaling by inhibiting activation of NF-kappa-B mediated by TNF. Negatively regulates TLR3/4- and RIG-I-mediated IRF3 activation and subsequent IFNB1 production and cellular antiviral response by promoting 'Lys-48'-linked polyubiquitination of TNK1 leading to its proteasomal degradation. The polypeptide is E3 ubiquitin-protein ligase TRAIP (Mus musculus (Mouse)).